A 76-amino-acid polypeptide reads, in one-letter code: Heat shock factor-binding protein 1 (76 aa).

Belongs to the HSBP1 family. Homohexamer. Associates with heptad repeats of HSF1 trimers and probably also HSF1 monomers, and with HSP70. Association with HSF1 trimers and HSP70 coincides with attenuation of heat shock response and the conversion of HSF1 trimer to monomer.

The protein resides in the nucleus. Negative regulator of the heat shock response. Negatively affects HSF1 DNA-binding activity. May have a role in the suppression of the activation of the stress response during the aging process. The sequence is that of Heat shock factor-binding protein 1 (HSBP1) from Homo sapiens (Human).